We begin with the raw amino-acid sequence, 770 residues long: Formate acetyltransferase (770 aa).

The region spanning 5-635 is the PFL domain; sequence NEMQKLAWAG…KTGNTPDGRR (631 aa). Cys419 serves as the catalytic S-acetylcysteine intermediate. Cys420 functions as the Cysteine radical intermediate in the catalytic mechanism. Residues 642–770 form the Glycine radical domain; the sequence is PGANPMHGRD…VITRTFTESM (129 aa). Gly745 bears the Glycine radical mark.

This sequence belongs to the glycyl radical enzyme (GRE) family. PFL subfamily. Homodimer.

The protein resides in the cytoplasm. It carries out the reaction formate + acetyl-CoA = pyruvate + CoA. It participates in fermentation; pyruvate fermentation; formate from pyruvate: step 1/1. Its function is as follows. Catalyzes the conversion of pyruvate to formate and acetyl-CoA. The polypeptide is Formate acetyltransferase (pflB) (Haemophilus influenzae (strain ATCC 51907 / DSM 11121 / KW20 / Rd)).